Here is a 184-residue protein sequence, read N- to C-terminus: Peptidyl-tRNA hydrolase (184 aa).

Residue Tyr14 participates in tRNA binding. Catalysis depends on His19, which acts as the Proton acceptor. The tRNA site is built by Phe64, Asn66, and Asn112.

It belongs to the PTH family. As to quaternary structure, monomer.

Its subcellular location is the cytoplasm. The catalysed reaction is an N-acyl-L-alpha-aminoacyl-tRNA + H2O = an N-acyl-L-amino acid + a tRNA + H(+). In terms of biological role, hydrolyzes ribosome-free peptidyl-tRNAs (with 1 or more amino acids incorporated), which drop off the ribosome during protein synthesis, or as a result of ribosome stalling. Its function is as follows. Catalyzes the release of premature peptidyl moieties from peptidyl-tRNA molecules trapped in stalled 50S ribosomal subunits, and thus maintains levels of free tRNAs and 50S ribosomes. This Thermoanaerobacter sp. (strain X514) protein is Peptidyl-tRNA hydrolase.